The sequence spans 439 residues: Exosome complex component RRP45 (439 aa).

The interval 1–268 is ARE binding; that stretch reads MKETPLSNCE…AEITELILKA (268 aa). Position 65 is a phosphoserine (Ser65). Lys297 is subject to N6-acetyllysine; alternate. Lys297 is covalently cross-linked (Glycyl lysine isopeptide (Lys-Gly) (interchain with G-Cter in SUMO1); alternate). Lys297 is covalently cross-linked (Glycyl lysine isopeptide (Lys-Gly) (interchain with G-Cter in SUMO2); alternate). Residues Ser306, Val325, Ser327, and Ser346 each carry the phosphoserine modification. Disordered regions lie at residues 335–363 and 391–439; these read GTAQ…GGGD and LSDS…RAAN. Residues 349 to 361 show a composition bias toward acidic residues; the sequence is DLEDSEKEDDEGG. Residues Ser392, Ser394, Lys409, and Ile411 each carry the phosphoserine modification. Lys419 is covalently cross-linked (Glycyl lysine isopeptide (Lys-Gly) (interchain with G-Cter in SUMO2)). Over residues 425–439 the composition is skewed to basic residues; that stretch reads SKKPVKRRKKKRAAN.

Belongs to the RNase PH family. Component of the RNA exosome core complex (Exo-9), composed of EXOSC1, EXOSC2, EXOSC3, EXOSC4, EXOSC5, EXOSC6, EXOSC7, EXOSC8 and EXOSC9; within the complex interacts with EXOSC3, EXOSC4, EXOSC5 and DIS3. The catalytically inactive RNA exosome core complex (Exo-9) associates with the catalytic subunit EXOSC10/RRP6. Exo-9 may associate with DIS3 to form the nucleolar exosome complex, or DIS3L to form the cytoplasmic exosome complex. Exo-9 is formed by a hexameric base ring consisting of the heterodimers EXOSC4-EXOSC9, EXOSC5-EXOSC8 and EXOSC6-EXOSC7, and a cap ring consisting of EXOSC1, EXOSC2 and EXOSC3. The RNA exosome complex associates with cofactors C1D/RRP47, MPHOSPH6/MPP6 and MTREX/MTR4. Interacts (via C-terminus region) with SETX (via N-terminus domain); the interaction enhances SETX sumoylation. Interacts with DIS3; the interaction is direct.

It localises to the cytoplasm. The protein localises to the nucleus. The protein resides in the nucleolus. Its subcellular location is the nucleoplasm. In terms of biological role, non-catalytic component of the RNA exosome complex which has 3'-&gt;5' exoribonuclease activity and participates in a multitude of cellular RNA processing and degradation events. In the nucleus, the RNA exosome complex is involved in proper maturation of stable RNA species such as rRNA, snRNA and snoRNA, in the elimination of RNA processing by-products and non-coding 'pervasive' transcripts, such as antisense RNA species and promoter-upstream transcripts (PROMPTs), and of mRNAs with processing defects, thereby limiting or excluding their export to the cytoplasm. The RNA exosome may be involved in Ig class switch recombination (CSR) and/or Ig variable region somatic hypermutation (SHM) by targeting AICDA deamination activity to transcribed dsDNA substrates. In the cytoplasm, the RNA exosome complex is involved in general mRNA turnover and specifically degrades inherently unstable mRNAs containing AU-rich elements (AREs) within their 3' untranslated regions, and in RNA surveillance pathways, preventing translation of aberrant mRNAs. It seems to be involved in degradation of histone mRNA. The catalytic inactive RNA exosome core complex of 9 subunits (Exo-9) is proposed to play a pivotal role in the binding and presentation of RNA for ribonucleolysis, and to serve as a scaffold for the association with catalytic subunits and accessory proteins or complexes. EXOSC9 binds to ARE-containing RNAs. The chain is Exosome complex component RRP45 (EXOSC9) from Homo sapiens (Human).